A 288-amino-acid polypeptide reads, in one-letter code: Glucose-1-phosphate thymidylyltransferase (288 aa).

Residues D108 and D223 each contribute to the Mg(2+) site.

Belongs to the glucose-1-phosphate thymidylyltransferase family. In terms of assembly, homotetramer. It depends on Mg(2+) as a cofactor.

It carries out the reaction dTTP + alpha-D-glucose 1-phosphate + H(+) = dTDP-alpha-D-glucose + diphosphate. Functionally, catalyzes the formation of dTDP-glucose, from dTTP and glucose 1-phosphate, as well as its pyrophosphorolysis. This is Glucose-1-phosphate thymidylyltransferase (rmlA) from Neisseria gonorrhoeae.